Consider the following 216-residue polypeptide: DNA gyrase subunit B (216 aa).

Residues 140–216 enclose the Toprim domain; the sequence is SELYLVEGDS…PDKLRYHKII (77 aa).

It belongs to the type II topoisomerase GyrB family. In terms of assembly, heterotetramer, composed of two GyrA and two GyrB chains. In the heterotetramer, GyrA contains the active site tyrosine that forms a transient covalent intermediate with DNA, while GyrB binds cofactors and catalyzes ATP hydrolysis.

Its subcellular location is the cytoplasm. It catalyses the reaction ATP-dependent breakage, passage and rejoining of double-stranded DNA.. In terms of biological role, a type II topoisomerase that negatively supercoils closed circular double-stranded (ds) DNA in an ATP-dependent manner to modulate DNA topology and maintain chromosomes in an underwound state. Negative supercoiling favors strand separation, and DNA replication, transcription, recombination and repair, all of which involve strand separation. Also able to catalyze the interconversion of other topological isomers of dsDNA rings, including catenanes and knotted rings. Type II topoisomerases break and join 2 DNA strands simultaneously in an ATP-dependent manner. The polypeptide is DNA gyrase subunit B (gyrB) (Acinetobacter bereziniae (Acinetobacter genomosp. 10)).